A 367-amino-acid chain; its full sequence is Transcription factor aptf-2 (367 aa).

Residues Val29 to Val49 form a disordered region. Polar residues predominate over residues Gly36 to Pro47. Positions Ala220–Thr354 are H-S-H (helix-span-helix), dimerization.

The protein belongs to the AP-2 family. In terms of assembly, binds DNA as a dimer.

Its subcellular location is the nucleus. It is found in the cytoplasm. In terms of biological role, sequence-specific DNA-binding protein that interacts with enhancer elements to regulate transcription of selected genes. Required for neuroblast and epidermal morphogenesis, perhaps acting in cooperation with transcription factor aptf-4. The protein is Transcription factor aptf-2 of Caenorhabditis elegans.